We begin with the raw amino-acid sequence, 127 residues long: Aspartate 1-decarboxylase (127 aa).

Ser25 functions as the Schiff-base intermediate with substrate; via pyruvic acid in the catalytic mechanism. Ser25 bears the Pyruvic acid (Ser) mark. Thr57 serves as a coordination point for substrate. The active-site Proton donor is the Tyr58. 73-75 (GAA) is a substrate binding site.

This sequence belongs to the PanD family. In terms of assembly, heterooctamer of four alpha and four beta subunits. It depends on pyruvate as a cofactor. In terms of processing, is synthesized initially as an inactive proenzyme, which is activated by self-cleavage at a specific serine bond to produce a beta-subunit with a hydroxyl group at its C-terminus and an alpha-subunit with a pyruvoyl group at its N-terminus.

Its subcellular location is the cytoplasm. It catalyses the reaction L-aspartate + H(+) = beta-alanine + CO2. It functions in the pathway cofactor biosynthesis; (R)-pantothenate biosynthesis; beta-alanine from L-aspartate: step 1/1. Functionally, catalyzes the pyruvoyl-dependent decarboxylation of aspartate to produce beta-alanine. The polypeptide is Aspartate 1-decarboxylase (Bacillus cereus (strain ATCC 10987 / NRS 248)).